The sequence spans 680 residues: MCNIPQHQSRAAWLRAELARHNRLYYELDTPEISDAEYDTLYRELVNLETLWPALMDEASPTQRVGGEVLDRLEKQAHTMRMYSLDNAFSRDEWGAFIQRMYNTLPETPSSFWCDPKMDGLALEVIYENGVFTSALTRGNGAEGEVVTAAMRTVRNLPLRLRGNNVPHRLEVRGEVVIAKADFEQLNARQSAVGGKVFANPRNAAAGSVRQLDTSITAGRPLQFLAYGVGQVVLDGGTAPWTTHSDLMARLREWGFDSPPEGRLCTSPDEVWAYYEMLGARRESLAIEIDGVVAKVDDTEAQEALGFTARAPRWALALKFPAMQVRTRLQDIRVQVGRTGVLTPVAILEPVRVGGVEVSRATLHNAYEIEDKGLMLGDMVLVQRAGDVIPEVVRPLVEDRTGGERPFVFPTTCPECGSVVHKPNDEVAHRCINVSCPAVRRQSIIHFVSKAGLDVRGFGEHIVQQLVDAGRVTTAADLFSLTTVDLMGFERMGPTSAANAIASLDAARTGATLARLICALGIRHVGEQTARTLATHFVDLDAMRKADGEKLLHLPDIGPEVAASIRCFFDNQSNIELLEQLRDKGLWPRKPDANGPFVREGSQLQGLKLLFTGSLQRMSRSEAKRMAEAAGAHVVSNVSKSLDMIVAGADAGSKLDQAKSLGLHVIDEDAFANLLKGLDR.

NAD(+)-binding positions include Asp-35–Asp-39, Ser-84–Leu-85, and Asp-115. The active-site N6-AMP-lysine intermediate is the Lys-117. NAD(+) contacts are provided by Arg-138, Glu-175, Lys-295, and Lys-319. Residues Cys-413, Cys-416, Cys-431, and Cys-436 each contribute to the Zn(2+) site. The BRCT domain maps to Arg-599 to Arg-680.

The protein belongs to the NAD-dependent DNA ligase family. LigA subfamily. The cofactor is Mg(2+). Mn(2+) serves as cofactor.

It carries out the reaction NAD(+) + (deoxyribonucleotide)n-3'-hydroxyl + 5'-phospho-(deoxyribonucleotide)m = (deoxyribonucleotide)n+m + AMP + beta-nicotinamide D-nucleotide.. Its function is as follows. DNA ligase that catalyzes the formation of phosphodiester linkages between 5'-phosphoryl and 3'-hydroxyl groups in double-stranded DNA using NAD as a coenzyme and as the energy source for the reaction. It is essential for DNA replication and repair of damaged DNA. This chain is DNA ligase 1, found in Nitratidesulfovibrio vulgaris (strain DP4) (Desulfovibrio vulgaris).